The sequence spans 101 residues: Replication restart protein PriB (101 aa).

Residues 1–101 form the SSB domain; the sequence is MATNHLVLSG…LHAENVELKT (101 aa).

Belongs to the PriB family. As to quaternary structure, homodimer. Interacts with PriA and DnaT. Component of the replication restart primosome. Primosome assembly occurs via a 'hand-off' mechanism. PriA binds to replication forks, subsequently PriB then DnaT bind; DnaT then displaces ssDNA to generate the helicase loading substrate.

Involved in the restart of stalled replication forks, which reloads the replicative helicase on sites other than the origin of replication; the PriA-PriB pathway is the major replication restart pathway. During primosome assembly it facilitates complex formation between PriA and DnaT on DNA; stabilizes PriA on DNA. Stimulates the DNA unwinding activity of PriA helicase. In Shewanella sediminis (strain HAW-EB3), this protein is Replication restart protein PriB.